Consider the following 1347-residue polypeptide: MDSEDDPLLQDVWLEEEQPEDEACRGIPGPGLQSGAQGCWRRWTLPSRPPTLGFWSTLGWAFTNPCCAGLVLFLGCSIPMVLSAFMFLYYPPLDIDISYNAFEIRNHEASQRFDALALALKSQFGSWGRNRRDLADFTSETLQRLISEQLQQLHLGNHSRPASRAPRSAPRDTVATQTSAANSSERRRREAPSPEGQVTNQSRARRGASRWDYSRTYVSANTQTHAHWRIELIFLARGDAERNIFTSERLVTIHEIERKIMDHPGFREFCWKPHEVLKDLPLGSYSYCSPPSSLMTYFFPTERGGKIYYDGMGQDLADIRGSLELAMTHPEFYWYVDEGLSVDNLKSSLLRSEILFGAPLPNYYSVDDRWEEQRAKFQSFVVTYVAMLAKQSTSKVQVLYGGTDLFDYEVRRTFNNDMLLAFISSSCIAALVYILTSCSVFLSFFGIASIGLSCLVALFLYHVVFGIQYLGILNGVAAFVIVGIGVDDVFVFINTYRQATHLEDPQLRMIHTIQTAGKATFFTSLTTAAAYAANVFSQIPAVHDFGLFMSLIVTCCWLAVLFTMPAALGLWSLYMAPLESSCQNSCHQKCGRKSSLHFPGDLFTAPERAGGGPAQGPLPYLDDDIPLLNVEDEPASLELGDVSLVSVHCEGLQPTPDANSRGQLLAQLQELLHHWVLWAAVKSRWVIVGLFASILILSLVFASRLRPASRAPLLFRPDTNIQVLLDLKYNLSAEGISCITCSGLFQEKPHSLQNNVRTSLEKKKRGSGVSWASRTETTAQESMSTVYISKVKSKGHPAVYRLSLNASLPAPWQAVSPGDGEVPSFQVYRAPFGDFTKKLTACMSTVGLLQAASPSRKWMVTALACDARRGWKFDFSFYVATKEQQHTRKLYFAQSHKPPFHGRLCVAPPGCLLSSSPDGPTKGFFYVPSDKVPKARISATFGFNPCVNTGCGKPAVRPLVDTGAMVFVVFGIIGLNRTQQMDNHVIGDPGSVIYDSSFDLFKEIGHLCRLCKAIAGNSELVKPGGAQCLPSGYSISSFLQMLHPECKELPEPNLLPGQLSHGAVGVKEGRVQWISMAFESTTYKGKSSFQTYSDYLRWESFLRQQLQTFPEGSALHRGFQTCEHWKQIFMEIIGVQSALYGLVLSLLICVAAVAVFTTHVLLLLPVLLSILGIVCLVVTIMYWSGWEMGAVEAISLSILVGSSVDYCVHLVEGYLLAGENLPPQLSQDPSSQRQWRTLEAVRHVGVAIVSSALTTVIATVPLFFCIIAPFAKFGKIVALNTGVSILYTLTVSTALLGIMAPGSFTRTRTSFLKALGAVLLAGALGLGACLVLLRSGYKIPLPSGATL.

Residues 1–67 (MDSEDDPLLQ…LGWAFTNPCC (67 aa)) are Cytoplasmic-facing. Residues 68–88 (AGLVLFLGCSIPMVLSAFMFL) form a helical membrane-spanning segment. At 89 to 417 (YYPPLDIDIS…YEVRRTFNND (329 aa)) the chain is on the lumenal side. The interval 156–207 (GNHSRPASRAPRSAPRDTVATQTSAANSSERRRREAPSPEGQVTNQSRARRG) is disordered. N157 is a glycosylation site (N-linked (GlcNAc...) asparagine). Residues 159 to 168 (SRPASRAPRS) show a composition bias toward low complexity. An SSD domain is found at 412 to 570 (RTFNNDMLLA…LFTMPAALGL (159 aa)). Residues 418–438 (MLLAFISSSCIAALVYILTSC) traverse the membrane as a helical segment. A topological domain (cytoplasmic) is located at residue S439. Residues 440–460 (VFLSFFGIASIGLSCLVALFL) traverse the membrane as a helical segment. The Lumenal segment spans residues 461 to 463 (YHV). The helical transmembrane segment at 464 to 484 (VFGIQYLGILNGVAAFVIVGI) threads the bilayer. Over 485 to 528 (GVDDVFVFINTYRQATHLEDPQLRMIHTIQTAGKATFFTSLTTA) the chain is Cytoplasmic. The helical transmembrane segment at 529 to 549 (AAYAANVFSQIPAVHDFGLFM) threads the bilayer. Position 550 (S550) is a topological domain, lumenal. A helical membrane pass occupies residues 551-571 (LIVTCCWLAVLFTMPAALGLW). Residues 572 to 684 (SLYMAPLESS…WVLWAAVKSR (113 aa)) are Cytoplasmic-facing. The helical transmembrane segment at 685–705 (WVIVGLFASILILSLVFASRL) threads the bilayer. At 706-1137 (RPASRAPLLF…IFMEIIGVQS (432 aa)) the chain is on the lumenal side. N976 is a glycosylation site (N-linked (GlcNAc...) asparagine). Residues 1138 to 1158 (ALYGLVLSLLICVAAVAVFTT) form a helical membrane-spanning segment. A topological domain (cytoplasmic) is located at residue H1159. Residues 1160–1180 (VLLLLPVLLSILGIVCLVVTI) form a helical membrane-spanning segment. Residues 1181 to 1246 (MYWSGWEMGA…TLEAVRHVGV (66 aa)) lie on the Lumenal side of the membrane. The chain crosses the membrane as a helical span at residues 1247-1267 (AIVSSALTTVIATVPLFFCII). The Cytoplasmic portion of the chain corresponds to 1268 to 1281 (APFAKFGKIVALNT). The chain crosses the membrane as a helical span at residues 1282-1302 (GVSILYTLTVSTALLGIMAPG). The Lumenal segment spans residues 1303 to 1310 (SFTRTRTS). A helical transmembrane segment spans residues 1311–1331 (FLKALGAVLLAGALGLGACLV). Residues 1332–1347 (LLRSGYKIPLPSGATL) lie on the Cytoplasmic side of the membrane.

The protein belongs to the patched family. Expressed in brain, retina, testis and thymus.

It is found in the endoplasmic reticulum membrane. The protein localises to the nucleus membrane. It localises to the cytoplasmic vesicle membrane. Its function is as follows. Plays a role in neuronal proliferation and differentiation. Plays a role in the accumulation of cellular cholesterol. Involved in intracellular lipid droplet formation. May contribute to cholesterol homeostasis in neuronal cells. The chain is Protein dispatched homolog 3 from Mus musculus (Mouse).